The primary structure comprises 239 residues: Phosphoglycolate phosphatase (239 aa).

Asp-14 (nucleophile) is an active-site residue. Asp-14 and Asp-16 together coordinate Mg(2+). Lys-160 contributes to the substrate binding site. Mg(2+) is bound by residues Asp-183 and Asp-187.

It belongs to the archaeal SPP-like hydrolase family. Requires Mg(2+) as cofactor.

The enzyme catalyses 2-phosphoglycolate + H2O = glycolate + phosphate. In terms of biological role, catalyzes the dephosphorylation of 2-phosphoglycolate. The polypeptide is Phosphoglycolate phosphatase (Aeropyrum pernix (strain ATCC 700893 / DSM 11879 / JCM 9820 / NBRC 100138 / K1)).